Reading from the N-terminus, the 125-residue chain is Small ribosomal subunit protein uS13 (125 aa).

Positions 94–125 are disordered; the sequence is SLPVRGQRTQTNARTRKGKRKTVAGKKKAVKK. Over residues 107 to 125 the composition is skewed to basic residues; the sequence is RTRKGKRKTVAGKKKAVKK.

Belongs to the universal ribosomal protein uS13 family. Part of the 30S ribosomal subunit. Forms a loose heterodimer with protein S19. Forms two bridges to the 50S subunit in the 70S ribosome.

In terms of biological role, located at the top of the head of the 30S subunit, it contacts several helices of the 16S rRNA. In the 70S ribosome it contacts the 23S rRNA (bridge B1a) and protein L5 of the 50S subunit (bridge B1b), connecting the 2 subunits; these bridges are implicated in subunit movement. Contacts the tRNAs in the A and P-sites. This chain is Small ribosomal subunit protein uS13, found in Prosthecochloris aestuarii (strain DSM 271 / SK 413).